Consider the following 748-residue polypeptide: Antigen peptide transporter 1 (748 aa).

Residues 1 to 15 are Cytoplasmic-facing; sequence MASSRCPAPRGCRCL. Residues 16-36 traverse the membrane as a helical segment; that stretch reads PGASLAWLGTVLLFLADWVLL. Residues 37–53 lie on the Lumenal side of the membrane; the sequence is RTALPRIFSLLVPTALP. Residues 54–76 traverse the membrane as a helical segment; sequence LLRVWAVGLSRWAVLWLGACGVL. Residues 77-92 lie on the Cytoplasmic side of the membrane; sequence RATVGSKSENAGAQGW. A helical membrane pass occupies residues 93–113; the sequence is LAALEPLAAALGLALPGLALF. The Lumenal portion of the chain corresponds to 114–133; the sequence is RELISWGAPGSADSTRLLHW. A helical membrane pass occupies residues 134-154; sequence GSHPSAFVVSYAAALPAAALW. Topologically, residues 155 to 186 are cytoplasmic; that stretch reads HKLGSLWVPGGQGGSGNPVRRLLGCLGSETRR. Residues 187 to 207 traverse the membrane as a helical segment; it reads LSLFLVLVVLSSLGEMAIPFF. An ABC transmembrane type-1 domain is found at 187 to 470; the sequence is LSLFLVLVVL…LLSIYPRVQK (284 aa). Topologically, residues 208–227 are lumenal; that stretch reads TGRLTDWILQDGSADTFTRN. A helical membrane pass occupies residues 228–248; it reads LTLMSILTIASAVLEFVGDGI. Over 249–298 the chain is Cytoplasmic; sequence YNNTMGHVHSHLQGEVFGAVLRQETEFFQQNQTGNITSRVTEDTSTLSDS. The helical transmembrane segment at 299–319 threads the bilayer; it reads LSENLSLFLWYLVRGLCLLGI. The Lumenal portion of the chain corresponds to 320–328; sequence MLWGSVSLT. The helical transmembrane segment at 329 to 349 threads the bilayer; that stretch reads MVTLVTLPLLFLLPKKVGKWY. The Cytoplasmic segment spans residues 350-418; sequence QLLEVQVRES…AVNSWTTSIS (69 aa). The interval 375–420 is part of the peptide-binding site; it reads PTVRSFANEEGEAQKFREKLQEIKTLNQKEAVAYAVNSWTTSISGM. Residues 419–439 traverse the membrane as a helical segment; it reads GMLLKVGILYIGGQLVTSGAV. The Lumenal segment spans residues 440 to 443; that stretch reads SSGN. A helical transmembrane segment spans residues 444–464; that stretch reads LVTFVLYQMQFTQAVEVLLSI. Residues 453 to 487 form a part of the peptide-binding site region; the sequence is QFTQAVEVLLSIYPRVQKAVGSSEKIFEYLDRTPR. Over 465–748 the chain is Cytoplasmic; it reads YPRVQKAVGS…MVQAPADAPE (284 aa). Residues 503-742 enclose the ABC transporter domain; the sequence is VQFQDVSFAY…KGCYWAMVQA (240 aa). ATP is bound by residues 538–546, 641–647, and Gln701; these read GPNGSGKST and SQLSGGQ. Ser545 provides a ligand contact to Mg(2+).

This sequence belongs to the ABC transporter superfamily. ABCB family. MHC peptide exporter (TC 3.A.1.209) subfamily. Heterodimer of TAP1 and TAP2 (TAP1-TAP2). A component of the peptide loading complex (PLC), interacts via TAPBP with MHCI heterodimer; this interaction mediates peptide-MHCI assembly. Interacts with PSMB5 and PSMB8. The cofactor is Mg(2+).

It localises to the endoplasmic reticulum membrane. The catalysed reaction is a peptide antigen(in) + ATP + H2O = a peptide antigen(out) + ADP + phosphate + H(+). In terms of biological role, ABC transporter associated with antigen processing. In complex with TAP2 mediates unidirectional translocation of peptide antigens from cytosol to endoplasmic reticulum (ER) for loading onto MHC class I (MHCI) molecules. Uses the chemical energy of ATP to export peptides against the concentration gradient. During the transport cycle alternates between 'inward-facing' state with peptide binding site facing the cytosol to 'outward-facing' state with peptide binding site facing the ER lumen. Peptide antigen binding to ATP-loaded TAP1-TAP2 induces a switch to hydrolysis-competent 'outward-facing' conformation ready for peptide loading onto nascent MHCI molecules. Subsequently ATP hydrolysis resets the transporter to the 'inward facing' state for a new cycle. As a component of the peptide loading complex (PLC), acts as a molecular scaffold essential for peptide-MHCI assembly and antigen presentation. The protein is Antigen peptide transporter 1 (TAP1) of Gorilla gorilla gorilla (Western lowland gorilla).